The chain runs to 358 residues: Tyrosinase ustQ (358 aa).

The N-linked (GlcNAc...) asparagine glycan is linked to Asn28. The chain crosses the membrane as a helical span at residues 37 to 57 (FVPVYAGLTIISLITVTVSLV). 2 N-linked (GlcNAc...) asparagine glycosylation sites follow: Asn91 and Asn109. Positions 128 and 137 each coordinate Cu cation. Asn172 and Asn214 each carry an N-linked (GlcNAc...) asparagine glycan. Cu cation-binding residues include His266, His270, and His292. Asn321 and Asn325 each carry an N-linked (GlcNAc...) asparagine glycan.

It belongs to the tyrosinase family. Cu(2+) serves as cofactor.

The protein resides in the membrane. It carries out the reaction 2 L-dopa + O2 = 2 L-dopaquinone + 2 H2O. It catalyses the reaction L-tyrosine + O2 = L-dopaquinone + H2O. The protein operates within mycotoxin biosynthesis. Tyrosinase; part of the gene cluster that mediates the biosynthesis of the secondary metabolite ustiloxin B, an antimitotic tetrapeptide. First, ustA is processed by the subtilisin-like endoprotease Kex2 that is outside the ustiloxin B gene cluster, at the C-terminal side of Arg-Lys, after transfer to Golgi apparatus through the endoplasmic reticulum (ER). Cleavage by KEX2 generates 16 peptides YAIG-I to YAIG-XVI. To process the precursor peptide further, at least two peptidases are necessary to cleave the N-terminal and C-terminal sides of the Tyr-Ala-Ile-Gly core peptide which serves as backbone for the synthesis of ustiloxin B, through cyclization and modification of the tyrosine with a non-protein coding amino acid, norvaline. One of the two peptidases must be the serine peptidase ustP; and the other pepdidase is probably ustH. Macrocyclization of the core peptide derived from ustA requires the tyrosinase ustQ, as well as the homologous oxidases ustYa and ustYb, and leads to the production of the first cyclization product N-desmethylustiloxin F. For the formation of N-desmethylustiloxin F, three oxidation steps are required, hydroxylation at the benzylic position, hydroxylation at either the aromatic ring of Tyr or beta-position of Ile, and oxidative cyclization. UstQ may catalyze the oxidation of a phenol moiety, whereas the ustYa and ustYb are most likely responsible for the remaining two-step oxidations. N-desmethylustiloxin F is then methylated by ustM to yield ustiloxin F which in turn substrate of the cytochrome P450 monooxygenase ustC which catalyzes the formation of S-deoxyustiloxin H. The flavoprotein monooxygenases ustF1 and ustF2 then participate in the modification of the side chain of S-deoxyustiloxin H, leading to the synthesis of an oxime intermediate, via ustiloxin H. Finally, carboxylative dehydration performed by the cysteine desulfurase-like protein ustD yields ustiloxin B. This chain is Tyrosinase ustQ, found in Aspergillus flavus (strain ATCC 200026 / FGSC A1120 / IAM 13836 / NRRL 3357 / JCM 12722 / SRRC 167).